A 428-amino-acid polypeptide reads, in one-letter code: Histidine--tRNA ligase (428 aa).

It belongs to the class-II aminoacyl-tRNA synthetase family.

Its subcellular location is the cytoplasm. The catalysed reaction is tRNA(His) + L-histidine + ATP = L-histidyl-tRNA(His) + AMP + diphosphate + H(+). This is Histidine--tRNA ligase from Korarchaeum cryptofilum (strain OPF8).